The following is a 530-amino-acid chain: UDP-N-acetylmuramoyl-L-alanyl-D-glutamate--2,6-diaminopimelate ligase (530 aa).

S21 serves as a coordination point for UDP-N-acetyl-alpha-D-muramoyl-L-alanyl-D-glutamate. Residue 99–105 (GTNGKSS) participates in ATP binding. UDP-N-acetyl-alpha-D-muramoyl-L-alanyl-D-glutamate-binding positions include 145–146 (TT), S172, Q178, and R180. The residue at position 212 (K212) is an N6-carboxylysine. In terms of domain architecture, RPE1 insert spans 221-269 (FKPAYREEFKGDTEHSTTAYILVREDASTGSTSKLLLEAKFGKMSTEYL). Meso-2,6-diaminopimelate is bound by residues R422, 446–449 (DNPR), G496, and E500. The Meso-diaminopimelate recognition motif signature appears at 446 to 449 (DNPR).

The protein belongs to the MurCDEF family. MurE subfamily. It depends on Mg(2+) as a cofactor. Post-translationally, carboxylation is probably crucial for Mg(2+) binding and, consequently, for the gamma-phosphate positioning of ATP.

Its subcellular location is the cytoplasm. The catalysed reaction is UDP-N-acetyl-alpha-D-muramoyl-L-alanyl-D-glutamate + meso-2,6-diaminopimelate + ATP = UDP-N-acetyl-alpha-D-muramoyl-L-alanyl-gamma-D-glutamyl-meso-2,6-diaminopimelate + ADP + phosphate + H(+). It functions in the pathway cell wall biogenesis; peptidoglycan biosynthesis. Catalyzes the addition of meso-diaminopimelic acid to the nucleotide precursor UDP-N-acetylmuramoyl-L-alanyl-D-glutamate (UMAG) in the biosynthesis of bacterial cell-wall peptidoglycan. The protein is UDP-N-acetylmuramoyl-L-alanyl-D-glutamate--2,6-diaminopimelate ligase of Rickettsia felis (strain ATCC VR-1525 / URRWXCal2) (Rickettsia azadi).